The chain runs to 133 residues: Large ribosomal subunit protein eL32y (133 aa).

It belongs to the eukaryotic ribosomal protein eL32 family.

In Arabidopsis thaliana (Mouse-ear cress), this protein is Large ribosomal subunit protein eL32y (RPL32B).